The primary structure comprises 450 residues: MRTYWLFLLLGGVVSAESLLSPNKRSKEASMDEWTDQQKGIAMGHMLNNIGDSGMHAKDINPGCIIASPSTDSPDYYYQWVRDSALTIMTILDRFFEGDKGLEPIIVKYMDEMVRLQKVPNPSGDFYAGGLGEPKFNVDGTSYDGDWGRPQNDSPALRAIAFIKYMNYLFENGKEVHEVTVWIEAVLADLDYTANHWTEASFDLWEEIKDVHYFTLAVQKRAMQDGTAFAKRIGAPDQAALYQRTIEPIDLKLGEFWDPGMGVIKGYKGRVDRSGLDCSTLLASLYSNEFDMHILPTLLKLQETMTRDYPVNQGWKQAMGRYPEDVYDGVSKSIGNPWFICTSSAAEIIYKAIAYYDNKGLPELTEYNIHFFMKFAEFGDPYNWSVIRKNMHTYADNFLKAVAEFQHPNGSMSEQFSRDDGHQKGARDLTWSYSSLLNAIYRREAIKGSV.

A signal peptide spans 1–16 (MRTYWLFLLLGGVVSA). Residues 17–28 (ESLLSPNKRSKE) constitute a propeptide that is removed on maturation. Substrate is bound at residue Trp-147. The active-site Proton acceptor is the Asp-203. Glu-206 (proton donor) is an active-site residue. N-linked (GlcNAc...) asparagine glycans are attached at residues Asn-383 and Asn-409.

The protein belongs to the glycosyl hydrolase 15 family.

The catalysed reaction is Hydrolysis of terminal (1-&gt;4)-linked alpha-D-glucose residues successively from non-reducing ends of the chains with release of beta-D-glucose.. This Schizosaccharomyces pombe (strain 972 / ATCC 24843) (Fission yeast) protein is Probable glucoamylase (meu17).